The chain runs to 67 residues: MRLVVCLVFLASFALVCQGYSSGYTRPLPKPSRPIFIRPIGCDVCYGIPSSTARLCCFRYGDCCHRG.

The first 19 residues, 1–19 (MRLVVCLVFLASFALVCQG), serve as a signal peptide directing secretion. 3 disulfides stabilise this stretch: Cys-42–Cys-56, Cys-45–Cys-63, and Cys-57–Cys-64. At Arg-66 the chain carries Arginine amide.

It belongs to the penaeidin family.

Its subcellular location is the cytoplasmic granule. Its function is as follows. Antibacterial and antifungal activity. Presents chitin-binding activity. The sequence is that of Penaeidin-4c from Penaeus vannamei (Whiteleg shrimp).